We begin with the raw amino-acid sequence, 263 residues long: Small ribosomal subunit protein uS3 (263 aa).

The region spanning 40 to 108 (IRNYLFKKFH…HIKVDVDVLE (69 aa)) is the KH type-2 domain. Residues 224-263 (KPKGSEANHQRRNSNKSKDYRDNKNKQFNKNHQNQQPAKE) form a disordered region. The span at 239–248 (KSKDYRDNKN) shows a compositional bias: basic and acidic residues. The segment covering 249 to 263 (KQFNKNHQNQQPAKE) has biased composition (low complexity).

The protein belongs to the universal ribosomal protein uS3 family. Part of the 30S ribosomal subunit. Forms a tight complex with proteins S10 and S14.

Its function is as follows. Binds the lower part of the 30S subunit head. Binds mRNA in the 70S ribosome, positioning it for translation. The chain is Small ribosomal subunit protein uS3 from Mycoplasmoides gallisepticum (strain R(low / passage 15 / clone 2)) (Mycoplasma gallisepticum).